The sequence spans 335 residues: Ketol-acid reductoisomerase (NADP(+)) (335 aa).

The region spanning 5–185 (SKIYTDKDSN…GATRAGVIPT (181 aa)) is the KARI N-terminal Rossmann domain. Residues 28-31 (YGSQ), Ser-56, and 86-89 (DMVQ) each bind NADP(+). The active site involves His-111. Gly-137 serves as a coordination point for NADP(+). The 146-residue stretch at 186–331 (TFKEETETDL…NQLKDLIQKG (146 aa)) folds into the KARI C-terminal knotted domain. Mg(2+)-binding residues include Asp-194, Glu-198, Glu-230, and Glu-234. Ser-255 is a substrate binding site.

The protein belongs to the ketol-acid reductoisomerase family. Requires Mg(2+) as cofactor.

It carries out the reaction (2R)-2,3-dihydroxy-3-methylbutanoate + NADP(+) = (2S)-2-acetolactate + NADPH + H(+). It catalyses the reaction (2R,3R)-2,3-dihydroxy-3-methylpentanoate + NADP(+) = (S)-2-ethyl-2-hydroxy-3-oxobutanoate + NADPH + H(+). It participates in amino-acid biosynthesis; L-isoleucine biosynthesis; L-isoleucine from 2-oxobutanoate: step 2/4. It functions in the pathway amino-acid biosynthesis; L-valine biosynthesis; L-valine from pyruvate: step 2/4. Its function is as follows. Involved in the biosynthesis of branched-chain amino acids (BCAA). Catalyzes an alkyl-migration followed by a ketol-acid reduction of (S)-2-acetolactate (S2AL) to yield (R)-2,3-dihydroxy-isovalerate. In the isomerase reaction, S2AL is rearranged via a Mg-dependent methyl migration to produce 3-hydroxy-3-methyl-2-ketobutyrate (HMKB). In the reductase reaction, this 2-ketoacid undergoes a metal-dependent reduction by NADPH to yield (R)-2,3-dihydroxy-isovalerate. The sequence is that of Ketol-acid reductoisomerase (NADP(+)) from Saccharolobus islandicus (strain M.16.27) (Sulfolobus islandicus).